A 262-amino-acid chain; its full sequence is MARHLLLFDIGNTNVKVGIATEGTVLTSYALPTDGTQTGDGFGLALLDIMRHAGLGADDIDACVGSSVVPSLDPLLRHACERFLWRPLQLAHVDLPVPLENRYERPTEVGADRLVAAFAARRLYPDARALVSVDFGTATTFDCVDGDAYLGGLICPGVLSSAGALSSRTAKLPRVSLEVSEDMPVVGRSTTTSLNHGFIFGFAALAEGVTARLRKVLPEPLEVVATGGFARAVARVSDCFDHVRPDLLLEGLRLLYLESEQR.

Residue 9–16 (DIGNTNVK) participates in ATP binding. Substrate contacts are provided by residues Y103 and 110 to 113 (GADR). D112 acts as the Proton acceptor in catalysis. Residue D134 participates in K(+) binding. T137 provides a ligand contact to ATP. T190 contributes to the substrate binding site.

This sequence belongs to the type III pantothenate kinase family. As to quaternary structure, homodimer. NH4(+) is required as a cofactor. It depends on K(+) as a cofactor.

It is found in the cytoplasm. The enzyme catalyses (R)-pantothenate + ATP = (R)-4'-phosphopantothenate + ADP + H(+). It participates in cofactor biosynthesis; coenzyme A biosynthesis; CoA from (R)-pantothenate: step 1/5. Catalyzes the phosphorylation of pantothenate (Pan), the first step in CoA biosynthesis. The chain is Type III pantothenate kinase from Nitratidesulfovibrio vulgaris (strain ATCC 29579 / DSM 644 / CCUG 34227 / NCIMB 8303 / VKM B-1760 / Hildenborough) (Desulfovibrio vulgaris).